Consider the following 1162-residue polypeptide: Paired amphipathic helix protein Sin3-like 5 (1162 aa).

Residues 1 to 37 (MKRVREEVYVEPQMRGPTVSSRGETNGRPSTISGGGT) are disordered. Polar residues predominate over residues 18–30 (TVSSRGETNGRPS). PAH domains follow at residues 28–109 (RPST…LPKG) and 123–193 (KPVD…LPDF). 4 disordered regions span residues 702–727 (RVSDVSMGGHKVEREEGELSPTESCE), 743–779 (QKLPDNEISNTDREPKEGACGTEAVTRSNALPEDDDN), 803–830 (GGQVSSDEEHKGAESENEAGGMVNSNEG), and 1121–1143 (KKATLNPTGPENVKTSDSSELSR). The residue at position 817 (Ser-817) is a Phosphoserine. Polar residues predominate over residues 1123–1139 (ATLNPTGPENVKTSDSS).

The protein resides in the nucleus. Its function is as follows. Acts as a transcriptional repressor. Plays roles in regulating gene expression and genome stability. The protein is Paired amphipathic helix protein Sin3-like 5 (SNL5) of Arabidopsis thaliana (Mouse-ear cress).